A 1044-amino-acid polypeptide reads, in one-letter code: Elongation factor 3B (1044 aa).

Serine 2 carries the N-acetylserine modification. The HEAT 1 repeat unit spans residues 5-42; it reads QQSITVLEELFRKLETATSETREGISSELSSFLNGNII. Residues isoleucine 42, histidine 44, and serine 83 each coordinate ADP. 6 HEAT repeats span residues 86 to 123, 124 to 162, 166 to 203, 205 to 241, 242 to 279, and 285 to 323; these read PYIV…AVNP, VAVK…AAKE, LRMP…TVDN, DIER…EVTP, ATLS…LVED, and PFLG…VGNV. Lysine 187 and lysine 196 each carry N6,N6,N6-trimethyllysine. ADP contacts are provided by threonine 392, histidine 396, and glutamate 397. ABC transporter domains follow at residues 426–641 and 667–993; these read DEGE…YYEL and VKVS…KKEE. Asparagine 703 serves as a coordination point for ADP. Lysine 789 carries the post-translational modification N6,N6,N6-trimethyllysine. The ADP site is built by glutamate 922, asparagine 925, and histidine 951. Threonine 972 is modified (phosphothreonine). Position 974 is a phosphoserine (serine 974). Residues 975-1044 form a disordered region; that stretch reads GHNWVAGQGA…DEYVSSDEDF (70 aa). The segment covering 987 to 999 has biased composition (basic and acidic residues); that stretch reads RIEKKEEEGDKFD. Residues 1020 to 1031 show a composition bias toward basic residues; that stretch reads RKKKKERMKKKK. Serine 1039 and serine 1040 each carry phosphoserine.

Belongs to the ABC transporter superfamily. ABCF family. EF3 subfamily. Monomer.

It localises to the cytoplasm. The enzyme catalyses ATP + H2O = ADP + phosphate + H(+). The protein operates within protein biosynthesis; polypeptide chain elongation. In terms of biological role, ribosome-dependent ATPase that promotes the translation of proteins required for detoxification of reactive oxygen species. Required for the ATP-dependent release of deacylated tRNA from the ribosomal E-site during protein biosynthesis. Stimulates the eEF1A-dependent binding of aminoacyl-tRNA to the ribosomal A-site, which has reduced affinity for tRNA as long as the E-site is occupied. Assists translation termination by stimulating the release of nascent protein from the ribosome by release factors. This chain is Elongation factor 3B, found in Saccharomyces cerevisiae (strain ATCC 204508 / S288c) (Baker's yeast).